Here is a 363-residue protein sequence, read N- to C-terminus: Mitogen-activated protein kinase 12 (363 aa).

Residues 25–309 enclose the Protein kinase domain; it reads YKDLKQVGTG…AAEALAFPFF (285 aa). Residues 31 to 39 and Lys-54 contribute to the ATP site; that span reads VGTGAYGTV. Asp-151 acts as the Proton acceptor in catalysis. The residue at position 181 (Thr-181) is a Phosphothreonine. The short motif at 181–183 is the TXY element; the sequence is TGY. Tyr-183 is modified (phosphotyrosine).

Belongs to the protein kinase superfamily. CMGC Ser/Thr protein kinase family. MAP kinase subfamily. It depends on Mg(2+) as a cofactor. In terms of processing, dually phosphorylated on Thr-181 and Tyr-183, which activates the enzyme.

Its subcellular location is the cytoplasm. The enzyme catalyses L-seryl-[protein] + ATP = O-phospho-L-seryl-[protein] + ADP + H(+). It catalyses the reaction L-threonyl-[protein] + ATP = O-phospho-L-threonyl-[protein] + ADP + H(+). Its activity is regulated as follows. Activated by threonine and tyrosine phosphorylation. In terms of biological role, serine/threonine kinase which acts as an essential component of the MAP kinase signal transduction pathway. MAPK12 is one of the four p38 MAPKs which play an important role in the cascades of cellular responses evoked by extracellular stimuli such as pro-inflammatory cytokines or physical stress leading to direct activation of transcription factors. Accordingly, p38 MAPKs phosphorylate a broad range of proteins and it has been estimated that they may have approximately 200 to 300 substrates each. Some of the targets are downstream kinases such as MAPKAPK2, which are activated through phosphorylation and further phosphorylate additional targets. This is Mitogen-activated protein kinase 12 (mapk12) from Danio rerio (Zebrafish).